Reading from the N-terminus, the 213-residue chain is Receptor-binding cancer antigen expressed on SiSo cells (213 aa).

Topologically, residues 1–6 (MAITQF) are extracellular. A helical; Signal-anchor for type III membrane protein membrane pass occupies residues 7 to 27 (RLFKVCTCLATVLSFLKRLIC). At 28–213 (RSGRGRKLSG…EQNKMGVKLS (186 aa)) the chain is on the cytoplasmic side. The residue at position 36 (S36) is a Phosphoserine. T41 carries the post-translational modification Phosphothreonine. Y94 is modified (phosphotyrosine). The stretch at 168 to 209 (QAEEVLRQQKIADREKRAAEQQRKKMEKEAQRLLKKEQNKMG) forms a coiled coil. The span at 179–206 (ADREKRAAEQQRKKMEKEAQRLLKKEQN) shows a compositional bias: basic and acidic residues. The tract at residues 179–213 (ADREKRAAEQQRKKMEKEAQRLLKKEQNKMGVKLS) is disordered.

As to quaternary structure, homodimer.

It localises to the golgi apparatus membrane. Its function is as follows. May participate in suppression of cell proliferation and induces apoptotic cell death through activation of interleukin-1-beta converting enzyme (ICE)-like proteases. This chain is Receptor-binding cancer antigen expressed on SiSo cells (Ebag9), found in Rattus norvegicus (Rat).